Here is a 226-residue protein sequence, read N- to C-terminus: Enolase-phosphatase E1 (226 aa).

It belongs to the HAD-like hydrolase superfamily. MasA/MtnC family. As to quaternary structure, monomer. It depends on Mg(2+) as a cofactor.

The enzyme catalyses 5-methylsulfanyl-2,3-dioxopentyl phosphate + H2O = 1,2-dihydroxy-5-(methylsulfanyl)pent-1-en-3-one + phosphate. Its pathway is amino-acid biosynthesis; L-methionine biosynthesis via salvage pathway; L-methionine from S-methyl-5-thio-alpha-D-ribose 1-phosphate: step 3/6. It functions in the pathway amino-acid biosynthesis; L-methionine biosynthesis via salvage pathway; L-methionine from S-methyl-5-thio-alpha-D-ribose 1-phosphate: step 4/6. Functionally, bifunctional enzyme that catalyzes the enolization of 2,3-diketo-5-methylthiopentyl-1-phosphate (DK-MTP-1-P) into the intermediate 2-hydroxy-3-keto-5-methylthiopentenyl-1-phosphate (HK-MTPenyl-1-P), which is then dephosphorylated to form the acireductone 1,2-dihydroxy-3-keto-5-methylthiopentene (DHK-MTPene). The polypeptide is Enolase-phosphatase E1 (Shewanella amazonensis (strain ATCC BAA-1098 / SB2B)).